The sequence spans 425 residues: Terminal nucleotidyltransferase 5B (425 aa).

Positions 1–42 are disordered; that stretch reads MMPSESGAERRDRAAAQVGTAAATAVATAAPAGGGPDPEALS. Positions 15 to 31 are enriched in low complexity; that stretch reads AAQVGTAAATAVATAAP.

Belongs to the TENT family.

It localises to the cytoplasm. The protein localises to the nucleus. It catalyses the reaction RNA(n) + ATP = RNA(n)-3'-adenine ribonucleotide + diphosphate. Functionally, catalyzes the transfer of one adenosine molecule from an ATP to an mRNA poly(A) tail bearing a 3'-OH terminal group in an ATP hydrolysis-dependent manner. May be involved in maintaining the translation efficiency of at least some genes through preventing degradation of their mRNAs. Prefers RNA molecules that are adenosine-rich close to 3'-end. In addition, may inhibit cell proliferation and cell cycle progression through ubiquitination of beta-catenin/CTNNB1. The protein is Terminal nucleotidyltransferase 5B of Homo sapiens (Human).